A 351-amino-acid chain; its full sequence is Adenine deaminase (351 aa).

Residues H20, H22, and H200 each contribute to the Zn(2+) site. The active-site Proton donor is the E203. D281 contacts Zn(2+). D282 contacts substrate.

Belongs to the metallo-dependent hydrolases superfamily. Adenosine and AMP deaminases family. Adenine deaminase type 2 subfamily. The cofactor is Zn(2+).

It catalyses the reaction adenine + H2O + H(+) = hypoxanthine + NH4(+). Its function is as follows. Catalyzes the hydrolytic deamination of adenine to hypoxanthine. Plays an important role in the purine salvage pathway and in nitrogen catabolism. The chain is Adenine deaminase from Cupriavidus pinatubonensis (strain JMP 134 / LMG 1197) (Cupriavidus necator (strain JMP 134)).